The sequence spans 95 residues: uncharacterized protein (95 aa).

The N-terminal stretch at 1-22 (MLPGFTMIITSLLLTFFREVEH) is a signal peptide. Topologically, residues 23–52 (LLPECLTITNTPQRTLVLIQRFTLLQKVMT) are extracellular. A helical membrane pass occupies residues 53-69 (IHLLLSIGTLGSLFTLH). Topologically, residues 70 to 95 (PQLLKTNLLQKLHKELNSNLDYLISC) are cytoplasmic.

The protein resides in the host membrane. This is an uncharacterized protein from Acidianus bottle-shaped virus (isolate Italy/Pozzuoli) (ABV).